Here is a 619-residue protein sequence, read N- to C-terminus: Dihydroxy-acid dehydratase (619 aa).

Residue Asp81 participates in Mg(2+) binding. A [2Fe-2S] cluster-binding site is contributed by Cys122. Mg(2+) contacts are provided by Asp123 and Lys124. Position 124 is an N6-carboxylysine (Lys124). Residue Cys195 participates in [2Fe-2S] cluster binding. A Mg(2+)-binding site is contributed by Glu494. The Proton acceptor role is filled by Ser520.

It belongs to the IlvD/Edd family. Homodimer. It depends on [2Fe-2S] cluster as a cofactor. Mg(2+) serves as cofactor.

It carries out the reaction (2R)-2,3-dihydroxy-3-methylbutanoate = 3-methyl-2-oxobutanoate + H2O. The enzyme catalyses (2R,3R)-2,3-dihydroxy-3-methylpentanoate = (S)-3-methyl-2-oxopentanoate + H2O. It functions in the pathway amino-acid biosynthesis; L-isoleucine biosynthesis; L-isoleucine from 2-oxobutanoate: step 3/4. Its pathway is amino-acid biosynthesis; L-valine biosynthesis; L-valine from pyruvate: step 3/4. Its function is as follows. Functions in the biosynthesis of branched-chain amino acids. Catalyzes the dehydration of (2R,3R)-2,3-dihydroxy-3-methylpentanoate (2,3-dihydroxy-3-methylvalerate) into 2-oxo-3-methylpentanoate (2-oxo-3-methylvalerate) and of (2R)-2,3-dihydroxy-3-methylbutanoate (2,3-dihydroxyisovalerate) into 2-oxo-3-methylbutanoate (2-oxoisovalerate), the penultimate precursor to L-isoleucine and L-valine, respectively. The polypeptide is Dihydroxy-acid dehydratase (Shewanella sp. (strain MR-4)).